The sequence spans 298 residues: Palmitoyl-protein thioesterase 1 (298 aa).

A signal peptide spans 1–16 (MRYFPLLLCLLAITTA). Asparagine 20 is a glycosylation site (N-linked (GlcNAc...) asparagine). Intrachain disulfides connect cysteine 37–cysteine 38, cysteine 88–cysteine 120, and cysteine 144–cysteine 151. Residue serine 107 is the Nucleophile of the active site. The active site involves aspartate 224. The N-linked (GlcNAc...) asparagine glycan is linked to asparagine 250. Histidine 280 is a catalytic residue.

Belongs to the palmitoyl-protein thioesterase family.

The catalysed reaction is S-hexadecanoyl-L-cysteinyl-[protein] + H2O = L-cysteinyl-[protein] + hexadecanoate + H(+). In terms of biological role, removes thioester-linked fatty acyl groups such as palmitate (hexadecanoate) from modified cysteine residues in proteins or peptides. This chain is Palmitoyl-protein thioesterase 1 (ppt-1), found in Caenorhabditis elegans.